We begin with the raw amino-acid sequence, 198 residues long: Holliday junction branch migration complex subunit RuvA (198 aa).

Residues 1–64 (MYEYIKGKYI…EDFIGLYGFD (64 aa)) form a domain I region. The tract at residues 65-143 (SKEELEMFKL…PDELVDSSLE (79 aa)) is domain II. Residues 144-149 (IDTKDN) form a flexible linker region. Residues 150–198 (ENVMALSEALSALIALGYSEKEAESVLKKIDKNDSVENIIKNALKALMG) are domain III.

The protein belongs to the RuvA family. Homotetramer. Forms an RuvA(8)-RuvB(12)-Holliday junction (HJ) complex. HJ DNA is sandwiched between 2 RuvA tetramers; dsDNA enters through RuvA and exits via RuvB. An RuvB hexamer assembles on each DNA strand where it exits the tetramer. Each RuvB hexamer is contacted by two RuvA subunits (via domain III) on 2 adjacent RuvB subunits; this complex drives branch migration. In the full resolvosome a probable DNA-RuvA(4)-RuvB(12)-RuvC(2) complex forms which resolves the HJ.

The protein resides in the cytoplasm. Functionally, the RuvA-RuvB-RuvC complex processes Holliday junction (HJ) DNA during genetic recombination and DNA repair, while the RuvA-RuvB complex plays an important role in the rescue of blocked DNA replication forks via replication fork reversal (RFR). RuvA specifically binds to HJ cruciform DNA, conferring on it an open structure. The RuvB hexamer acts as an ATP-dependent pump, pulling dsDNA into and through the RuvAB complex. HJ branch migration allows RuvC to scan DNA until it finds its consensus sequence, where it cleaves and resolves the cruciform DNA. This chain is Holliday junction branch migration complex subunit RuvA, found in Clostridium beijerinckii (strain ATCC 51743 / NCIMB 8052) (Clostridium acetobutylicum).